Reading from the N-terminus, the 485-residue chain is Podocalyxin (485 aa).

The N-terminal stretch at 1 to 24 (MRPTLALSALLLLQLLLLSTPSLS) is a signal peptide. Residues 22–267 (SLSQDNGNKT…STPSSTWTSG (246 aa)) are disordered. Residues 25–386 (QDNGNKTDTS…PPEVNEDRFS (362 aa)) lie on the Extracellular side of the membrane. Positions 26-57 (DNGNKTDTSDITSIDQNQDKPATNQPSNATPK) are enriched in polar residues. N-linked (GlcNAc...) asparagine glycans are attached at residues Asn29 and Asn82. Low complexity predominate over residues 58 to 109 (SSVQPPTPTSISTSSPDPKATQSSNSSVTTTSDSTTDRTSSSTSTVPTTSNS). Polar residues-rich tracts occupy residues 110-128 (GQTV…TALP) and 135-149 (NASS…STKL). 3 N-linked (GlcNAc...) asparagine glycosylation sites follow: Asn135, Asn144, and Asn156. The segment covering 150 to 161 (PSTPTTNSTASP) has biased composition (low complexity). 3 stretches are compositionally biased toward polar residues: residues 163-176 (QPVS…TTVQ), 186-228 (DNTT…QPTG), and 235-253 (SVPT…TPVV). Asn187 is a glycosylation site (N-linked (GlcNAc...) asparagine). The segment covering 254–267 (SQGPSTPSSTWTSG) has biased composition (low complexity). Asn287 carries an N-linked (GlcNAc...) asparagine glycan. A helical transmembrane segment spans residues 387 to 407 (LPLIITIVCMASFLLLVAALY). At 408–485 (GCCHQRISQR…DLDEEEDTHL (78 aa)) the chain is on the cytoplasmic side. At Thr445 the chain carries Phosphothreonine. Ser464 carries the phosphoserine modification. Residue Thr483 is modified to Phosphothreonine.

Belongs to the podocalyxin family. As to quaternary structure, monomer; when associated with the membrane raft. Oligomer; when integrated in the apical membrane. Interacts with NHERF2. Interacts (via the C-terminal PDZ-binding motif DTHL) with NHERF1 (via the PDZ domains); the interaction take place early in the secretory pathway and is necessary for its apical membrane sorting. Found in a complex with EZR, PODXL and NHERF2. Associates with the actin cytoskeleton through complex formation with EZR and NHERF2. Interacts (via the C-terminal PDZ-binding motif DTHL) with NHERF1 (via the PDZ domains); interaction is not detected in glomerular epithelium cells. Interacts (via the C-terminal PDZ-binding motif DTHL) with NHERF2 (via the PDZ 1 domain); interaction is detected in glomerular epithelium cells. Interacts with EZR. In terms of processing, N- and O-linked glycosylated. Sialoglycoprotein. As to expression, glomerular epithelium cell (podocyte) (at protein level).

Its subcellular location is the apical cell membrane. It is found in the cell projection. It localises to the microvillus. The protein resides in the membrane raft. The protein localises to the lamellipodium. Its subcellular location is the filopodium. It is found in the ruffle. It localises to the membrane. Functionally, involved in the regulation of both adhesion and cell morphology and cancer progression. Functions as an anti-adhesive molecule that maintains an open filtration pathway between neighboring foot processes in the podocyte by charge repulsion. Acts as a pro-adhesive molecule, enhancing the adherence of cells to immobilized ligands, increasing the rate of migration and cell-cell contacts in an integrin-dependent manner. Induces the formation of apical actin-dependent microvilli. Involved in the formation of a preapical plasma membrane subdomain to set up initial epithelial polarization and the apical lumen formation during renal tubulogenesis. Plays a role in cancer development and aggressiveness by inducing cell migration and invasion through its interaction with the actin-binding protein EZR. Affects EZR-dependent signaling events, leading to increased activities of the MAPK and PI3K pathways in cancer cells. The protein is Podocalyxin (Podxl) of Rattus norvegicus (Rat).